The sequence spans 251 residues: MKKAGLLFLVMIVIAVVATGIGYWKLTGEESDTLRKIVLEQCLPNQQENQNPSPCAEVKPNAGYVVLKDRHGPLQYLLMPTYRINGTESPLLTDPSTPNFFWLAWQARDFMSQKYGQPVPDRAVSLAINSRTGRTQNHFHIHISCIRPDVREQLDNNLANISSRWLPLPGGLRGHEYLARRVTESELVQRSPFMMLAEEVPEAREHMGSYGLAMVRQSDNSFVLLATQRNLLTLNRASAEEIQDHQCEILR.

The chain crosses the membrane as a helical span at residues 4-24 (AGLLFLVMIVIAVVATGIGYW).

This sequence belongs to the Cdh family.

Its subcellular location is the cell inner membrane. The catalysed reaction is a CDP-1,2-diacyl-sn-glycerol + H2O = a 1,2-diacyl-sn-glycero-3-phosphate + CMP + 2 H(+). It functions in the pathway phospholipid metabolism; CDP-diacylglycerol degradation; phosphatidate from CDP-diacylglycerol: step 1/1. The chain is CDP-diacylglycerol pyrophosphatase from Escherichia coli O45:K1 (strain S88 / ExPEC).